Reading from the N-terminus, the 702-residue chain is Elongation factor G 1 (702 aa).

In terms of domain architecture, tr-type G spans 8-290; the sequence is ERYRNIGISA…AVIDFLPSPV (283 aa). GTP contacts are provided by residues 17 to 24, 88 to 92, and 142 to 145; these read AHIDAGKT, DTPGH, and NKMD.

This sequence belongs to the TRAFAC class translation factor GTPase superfamily. Classic translation factor GTPase family. EF-G/EF-2 subfamily.

It localises to the cytoplasm. Its function is as follows. Catalyzes the GTP-dependent ribosomal translocation step during translation elongation. During this step, the ribosome changes from the pre-translocational (PRE) to the post-translocational (POST) state as the newly formed A-site-bound peptidyl-tRNA and P-site-bound deacylated tRNA move to the P and E sites, respectively. Catalyzes the coordinated movement of the two tRNA molecules, the mRNA and conformational changes in the ribosome. The chain is Elongation factor G 1 from Cupriavidus pinatubonensis (strain JMP 134 / LMG 1197) (Cupriavidus necator (strain JMP 134)).